Reading from the N-terminus, the 566-residue chain is Glucose-6-phosphate isomerase (566 aa).

E374 acts as the Proton donor in catalysis. Residues H405 and K529 contribute to the active site.

This sequence belongs to the GPI family.

It localises to the cytoplasm. The enzyme catalyses alpha-D-glucose 6-phosphate = beta-D-fructose 6-phosphate. It participates in carbohydrate biosynthesis; gluconeogenesis. Its pathway is carbohydrate degradation; glycolysis; D-glyceraldehyde 3-phosphate and glycerone phosphate from D-glucose: step 2/4. Functionally, catalyzes the reversible isomerization of glucose-6-phosphate to fructose-6-phosphate. The polypeptide is Glucose-6-phosphate isomerase (Bifidobacterium longum (strain NCC 2705)).